The chain runs to 282 residues: NADPH-dependent 7-cyano-7-deazaguanine reductase (282 aa).

88-90 is a substrate binding site; the sequence is IES. 90–91 is an NADPH binding site; sequence SK. The active-site Thioimide intermediate is Cys-190. Catalysis depends on Asp-197, which acts as the Proton donor. 229-230 provides a ligand contact to substrate; it reads HE. NADPH is bound at residue 258 to 259; it reads RG.

It belongs to the GTP cyclohydrolase I family. QueF type 2 subfamily. In terms of assembly, homodimer.

It is found in the cytoplasm. The catalysed reaction is 7-aminomethyl-7-carbaguanine + 2 NADP(+) = 7-cyano-7-deazaguanine + 2 NADPH + 3 H(+). The protein operates within tRNA modification; tRNA-queuosine biosynthesis. In terms of biological role, catalyzes the NADPH-dependent reduction of 7-cyano-7-deazaguanine (preQ0) to 7-aminomethyl-7-deazaguanine (preQ1). The polypeptide is NADPH-dependent 7-cyano-7-deazaguanine reductase (Salmonella arizonae (strain ATCC BAA-731 / CDC346-86 / RSK2980)).